The following is a 426-amino-acid chain: L-cysteine:1D-myo-inositol 2-amino-2-deoxy-alpha-D-glucopyranoside ligase (426 aa).

Position 43 (cysteine 43) interacts with Zn(2+). Residues cysteine 43–threonine 46, serine 58, and asparagine 81–threonine 83 each bind L-cysteinyl-5'-AMP. The 'HIGH' region motif lies at isoleucine 45 to histidine 55. A 'ERGGDP' region motif is present at residues glutamate 200 to proline 205. Residue tryptophan 241 coordinates L-cysteinyl-5'-AMP. Cysteine 245 is a binding site for Zn(2+). Glycine 263–aspartate 265 is an L-cysteinyl-5'-AMP binding site. Residue histidine 270 coordinates Zn(2+). Valine 296 is an L-cysteinyl-5'-AMP binding site. The 'KMSKS' region signature appears at lysine 302–serine 306.

This sequence belongs to the class-I aminoacyl-tRNA synthetase family. MshC subfamily. As to quaternary structure, monomer. The cofactor is Zn(2+).

It catalyses the reaction 1D-myo-inositol 2-amino-2-deoxy-alpha-D-glucopyranoside + L-cysteine + ATP = 1D-myo-inositol 2-(L-cysteinylamino)-2-deoxy-alpha-D-glucopyranoside + AMP + diphosphate + H(+). Its function is as follows. Catalyzes the ATP-dependent condensation of GlcN-Ins and L-cysteine to form L-Cys-GlcN-Ins. This Arthrobacter sp. (strain FB24) protein is L-cysteine:1D-myo-inositol 2-amino-2-deoxy-alpha-D-glucopyranoside ligase.